The chain runs to 108 residues: uncharacterized protein (108 aa).

Residues 59–81 form a helical membrane-spanning segment; the sequence is NIVIILWKIMVVIISSIIHRTYI.

The protein resides in the membrane. This is an uncharacterized protein from Rickettsia conorii (strain ATCC VR-613 / Malish 7).